Here is a 588-residue protein sequence, read N- to C-terminus: Mediator of RNA polymerase II transcription subunit 26 (588 aa).

In terms of domain architecture, TFIIS N-terminal spans 10–87 (QMRDRLLQAI…RSWQKLIEPV (78 aa)). 2 disordered regions span residues 112–393 (RPEM…YTVN) and 412–441 (KLTFDPMTRQIRPLTQKEPVRADSPVPTEQ). The segment covering 123-133 (SIHDLKNRNDI) has biased composition (basic and acidic residues). Positions 179–191 (PLPTNGISGSPES) are enriched in polar residues. Positions 207–218 (SRLEPSDNEKHS) are enriched in basic and acidic residues. The span at 314–325 (SPLPLAQPPTPP) shows a compositional bias: pro residues. Phosphoserine is present on residues S435 and S458.

Belongs to the Mediator complex subunit 26 family. Component of the Mediator complex, which is composed of MED1, MED4, MED6, MED7, MED8, MED9, MED10, MED11, MED12, MED13, MED13L, MED14, MED15, MED16, MED17, MED18, MED19, MED20, MED21, MED22, MED23, MED24, MED25, MED26, MED27, MED29, MED30, MED31, CCNC, CDK8 and CDC2L6/CDK11. The MED12, MED13, CCNC and CDK8 subunits form a distinct module termed the CDK8 module. Mediator containing the CDK8 module is less active than Mediator lacking this module in supporting transcriptional activation. Individual preparations of the Mediator complex lacking one or more distinct subunits have been variously termed ARC, CRSP, DRIP, PC2, SMCC and TRAP. Interacts with CEBPB (when not methylated).

The protein localises to the nucleus. Functionally, component of the Mediator complex, a coactivator involved in the regulated transcription of nearly all RNA polymerase II-dependent genes. Mediator functions as a bridge to convey information from gene-specific regulatory proteins to the basal RNA polymerase II transcription machinery. Mediator is recruited to promoters by direct interactions with regulatory proteins and serves as a scaffold for the assembly of a functional pre-initiation complex with RNA polymerase II and the general transcription factors. In Mus musculus (Mouse), this protein is Mediator of RNA polymerase II transcription subunit 26 (Med26).